Consider the following 225-residue polypeptide: 7-cyano-7-deazaguanine synthase (225 aa).

ATP is bound at residue tyrosine 9 to leucine 19. The Zn(2+) site is built by cysteine 188, cysteine 198, cysteine 201, and cysteine 204.

It belongs to the QueC family. It depends on Zn(2+) as a cofactor.

It catalyses the reaction 7-carboxy-7-deazaguanine + NH4(+) + ATP = 7-cyano-7-deazaguanine + ADP + phosphate + H2O + H(+). It participates in purine metabolism; 7-cyano-7-deazaguanine biosynthesis. Its function is as follows. Catalyzes the ATP-dependent conversion of 7-carboxy-7-deazaguanine (CDG) to 7-cyano-7-deazaguanine (preQ(0)). The protein is 7-cyano-7-deazaguanine synthase of Geobacter sp. (strain M21).